The sequence spans 223 residues: Phosphoribosylformylglycinamidine synthase subunit PurQ (223 aa).

One can recognise a Glutamine amidotransferase type-1 domain in the interval 3–223 (SAVVQLPGLN…FASALDVVAA (221 aa)). Cys-86 (nucleophile) is an active-site residue. Residues His-196 and Glu-198 contribute to the active site.

In terms of assembly, part of the FGAM synthase complex composed of 1 PurL, 1 PurQ and 2 PurS subunits.

It is found in the cytoplasm. The enzyme catalyses N(2)-formyl-N(1)-(5-phospho-beta-D-ribosyl)glycinamide + L-glutamine + ATP + H2O = 2-formamido-N(1)-(5-O-phospho-beta-D-ribosyl)acetamidine + L-glutamate + ADP + phosphate + H(+). It catalyses the reaction L-glutamine + H2O = L-glutamate + NH4(+). The protein operates within purine metabolism; IMP biosynthesis via de novo pathway; 5-amino-1-(5-phospho-D-ribosyl)imidazole from N(2)-formyl-N(1)-(5-phospho-D-ribosyl)glycinamide: step 1/2. Part of the phosphoribosylformylglycinamidine synthase complex involved in the purines biosynthetic pathway. Catalyzes the ATP-dependent conversion of formylglycinamide ribonucleotide (FGAR) and glutamine to yield formylglycinamidine ribonucleotide (FGAM) and glutamate. The FGAM synthase complex is composed of three subunits. PurQ produces an ammonia molecule by converting glutamine to glutamate. PurL transfers the ammonia molecule to FGAR to form FGAM in an ATP-dependent manner. PurS interacts with PurQ and PurL and is thought to assist in the transfer of the ammonia molecule from PurQ to PurL. In Rhizobium etli (strain ATCC 51251 / DSM 11541 / JCM 21823 / NBRC 15573 / CFN 42), this protein is Phosphoribosylformylglycinamidine synthase subunit PurQ.